The chain runs to 355 residues: MDFLHRNGVLIIQHLQKDYRAYYTFLNFMSNVGDPRNIFFIYFPLCFQFNQTVGTKMIWVAVIGDWLNLIFKWILFGHRPYWWVQETQIYPNHSSPCLEQFPTTCETGPGSPSGHAMGASCVWYVMVTAALSHTVCGMDKFSITLHRLTWSFLWSVFWLIQISVCISRVFIATHFPHQVILGVIGGMLVAEAFEHTPGIQTASLGTYLKTNLFLFLFAVGFYLLLRVLNIDLLWSVPIAKKWCANPDWIHIDTTPFAGLVRNLGVLFGLGFAINSEMFLLSCRGGNNYTLSFRLLCALTSLTILQLYHFLQIPTHEEHLFYVLSFCKSASIPLTVVAFIPYSVHMLMKQSGKKSQ.

Topologically, residues 1–24 (MDFLHRNGVLIIQHLQKDYRAYYT) are lumenal. Residues 25–45 (FLNFMSNVGDPRNIFFIYFPL) traverse the membrane as a helical segment. Topologically, residues 46 to 56 (CFQFNQTVGTK) are cytoplasmic. The chain crosses the membrane as a helical span at residues 57–77 (MIWVAVIGDWLNLIFKWILFG). At 78 to 115 (HRPYWWVQETQIYPNHSSPCLEQFPTTCETGPGSPSGH) the chain is on the lumenal side. Substrate is bound at residue R79. N92 carries an N-linked (GlcNAc...) asparagine glycan. H115 functions as the Proton donor in the catalytic mechanism. The chain crosses the membrane as a helical span at residues 116-136 (AMGASCVWYVMVTAALSHTVC). Topologically, residues 137-146 (GMDKFSITLH) are cytoplasmic. Residues 147 to 167 (RLTWSFLWSVFWLIQISVCIS) traverse the membrane as a helical segment. R168 is a topological domain (lumenal). R168 lines the substrate pocket. The helical transmembrane segment at 169-189 (VFIATHFPHQVILGVIGGMLV) threads the bilayer. Catalysis depends on H174, which acts as the Nucleophile. Residues 190–211 (AEAFEHTPGIQTASLGTYLKTN) are Cytoplasmic-facing. The helical transmembrane segment at 212–232 (LFLFLFAVGFYLLLRVLNIDL) threads the bilayer. Over 233–261 (LWSVPIAKKWCANPDWIHIDTTPFAGLVR) the chain is Lumenal. A helical transmembrane segment spans residues 262–282 (NLGVLFGLGFAINSEMFLLSC). Topologically, residues 283 to 293 (RGGNNYTLSFR) are cytoplasmic. Residues 294–314 (LLCALTSLTILQLYHFLQIPT) form a helical membrane-spanning segment. Residues 315–318 (HEEH) are Lumenal-facing. Residues 319–339 (LFYVLSFCKSASIPLTVVAFI) traverse the membrane as a helical segment. Residues 340–355 (PYSVHMLMKQSGKKSQ) lie on the Cytoplasmic side of the membrane. Residues 352–355 (KKSQ) carry the Prevents secretion from ER motif.

This sequence belongs to the glucose-6-phosphatase family. N-glycosylated; the non-glycosylated form is more unstable and is degraded through the proteasome. As to expression, specifically expressed in pancreas and also detected to a lower extent in testis. Expressed by most islet cells in the pancreas (at protein level).

Its subcellular location is the endoplasmic reticulum membrane. It carries out the reaction D-glucose 6-phosphate + H2O = D-glucose + phosphate. Its pathway is carbohydrate biosynthesis; gluconeogenesis. May hydrolyze glucose-6-phosphate to glucose in the endoplasmic reticulum. May be responsible for glucose production through glycogenolysis and gluconeogenesis. In Homo sapiens (Human), this protein is Glucose-6-phosphatase 2 (G6PC2).